The chain runs to 72 residues: Metallothionein-like protein 1B (72 aa).

This sequence belongs to the metallothionein superfamily. Type 15 family. In terms of tissue distribution, expressed in leaves of mature plants.

Its function is as follows. Metallothioneins have a high content of cysteine residues that bind various heavy metals. Functions as a metal chelator of nickel (Ni), cadmium (Cd), zinc (Zn) and copper (Cu). Possesses higher affinity for Ni and Cd ions compared to Zn and Cu ions. This Oryza sativa subsp. japonica (Rice) protein is Metallothionein-like protein 1B (MT1B).